A 25-amino-acid polypeptide reads, in one-letter code: Small ribosomal subunit protein eS32 (25 aa).

The interval 1–25 (MRAKWRKKRVRRLKRKRRKTRARSK) is disordered.

It belongs to the eukaryotic ribosomal protein eS32 family. In terms of assembly, component of the small ribosomal subunit.

The sequence is that of Small ribosomal subunit protein eS32 (RPL41) from Quercus suber (Cork oak).